Here is a 211-residue protein sequence, read N- to C-terminus: Ribonuclease HII (211 aa).

Residues 16–205 enclose the RNase H type-2 domain; sequence APVCGVDEAG…VKAALAAAAV (190 aa). A divalent metal cation is bound by residues aspartate 22, glutamate 23, and aspartate 114.

The protein belongs to the RNase HII family. It depends on Mn(2+) as a cofactor. Mg(2+) is required as a cofactor.

The protein resides in the cytoplasm. It catalyses the reaction Endonucleolytic cleavage to 5'-phosphomonoester.. Its function is as follows. Endonuclease that specifically degrades the RNA of RNA-DNA hybrids. The polypeptide is Ribonuclease HII (rnhB) (Caulobacter vibrioides (strain ATCC 19089 / CIP 103742 / CB 15) (Caulobacter crescentus)).